Consider the following 960-residue polypeptide: Probable glutamyl endopeptidase, chloroplastic (960 aa).

The N-terminal 62 residues, 1–62 (MMRFHKACHR…FSENPLTTVM (62 aa)), are a transit peptide targeting the chloroplast. The disordered stretch occupies residues 78–98 (SGGAEDGGGTSNGSLSASATA). Polar residues predominate over residues 89–98 (NGSLSASATA). Active-site charge relay system residues include S780, D854, and H888. Residues 915-960 (TSDADTSPDQSKEGSDSADKVSTGTGGGNPEFGEHEVHSKLRRSLL) form a disordered region. Positions 924-933 (QSKEGSDSAD) are enriched in basic and acidic residues.

This sequence belongs to the peptidase S9D family.

The protein resides in the plastid. The protein localises to the chloroplast stroma. Functionally, serine-type protease active in vitro against the LHCII N-terminal. Cleaves its substrate on the carboxy-side of Glu residues. This is Probable glutamyl endopeptidase, chloroplastic (GEP) from Arabidopsis thaliana (Mouse-ear cress).